Here is a 557-residue protein sequence, read N- to C-terminus: Arginine--tRNA ligase (557 aa).

The 'HIGH' region signature appears at 132–142 (ANPTGNLHLGH).

This sequence belongs to the class-I aminoacyl-tRNA synthetase family. Monomer.

It localises to the cytoplasm. The enzyme catalyses tRNA(Arg) + L-arginine + ATP = L-arginyl-tRNA(Arg) + AMP + diphosphate. The chain is Arginine--tRNA ligase from Geobacillus thermodenitrificans (strain NG80-2).